We begin with the raw amino-acid sequence, 448 residues long: Probable ribonuclease FAU-1 (448 aa).

The disordered stretch occupies residues 426 to 448 (EAPGGKICTSEGLTSALPQSSSA). A compositionally biased stretch (polar residues) spans 436-448 (EGLTSALPQSSSA).

It belongs to the FAU-1 family.

Functionally, probable RNase involved in rRNA stability through maturation and/or degradation of precursor rRNAs. Binds to RNA in loop regions with AU-rich sequences. In Pyrobaculum islandicum (strain DSM 4184 / JCM 9189 / GEO3), this protein is Probable ribonuclease FAU-1.